A 300-amino-acid polypeptide reads, in one-letter code: Free fatty acid receptor 1 (300 aa).

The Extracellular segment spans residues Met-1 to Ser-8. A helical transmembrane segment spans residues Phe-9–Arg-31. At Ala-32 to Ser-41 the chain is on the cytoplasmic side. The helical transmembrane segment at Leu-42–Val-64 threads the bilayer. Residues Glu-65 to Cys-79 are Extracellular-facing. A disulfide bond links Cys-79 and Cys-170. A helical transmembrane segment spans residues Pro-80–Ser-101. Residues Ala-102–Cys-121 lie on the Cytoplasmic side of the membrane. A helical membrane pass occupies residues Tyr-122–Phe-142. Over Val-143–Ser-178 the chain is Extracellular. An N-linked (GlcNAc...) asparagine glycan is attached at Asn-155. A helical membrane pass occupies residues Ala-179–Phe-200. Over Cys-201 to Ala-223 the chain is Cytoplasmic. The chain crosses the membrane as a helical span at residues Trp-224–Phe-248. The Extracellular portion of the chain corresponds to Leu-249 to Ser-256. Residues Trp-257–Leu-279 form a helical membrane-spanning segment. The Cytoplasmic portion of the chain corresponds to Gly-280–Lys-300.

The protein belongs to the G-protein coupled receptor 1 family.

Its subcellular location is the cell membrane. Functionally, G-protein coupled receptor for medium and long chain saturated and unsaturated fatty acids that plays an important role in glucose homeostasis. Fatty acid binding increases glucose-stimulated insulin secretion, and may also enhance the secretion of glucagon-like peptide 1 (GLP-1). May also play a role in bone homeostasis; receptor signaling activates pathways that inhibit osteoclast differentiation. Ligand binding leads to a conformation change that triggers signaling via G-proteins that activate phospholipase C, leading to an increase of the intracellular calcium concentration. Seems to act through a G(q) and G(i)-mediated pathway. Mediates the anti-inflammatory effects of omega-3 polyunsaturated fatty acids (PUFAs) via inhibition of NLRP3 inflammasome activation. The sequence is that of Free fatty acid receptor 1 (FFAR1) from Macaca fascicularis (Crab-eating macaque).